Reading from the N-terminus, the 270-residue chain is 5'-nucleotidase SurE (270 aa).

A divalent metal cation is bound by residues aspartate 8, aspartate 9, serine 40, and asparagine 98.

It belongs to the SurE nucleotidase family. It depends on a divalent metal cation as a cofactor.

The protein resides in the cytoplasm. The catalysed reaction is a ribonucleoside 5'-phosphate + H2O = a ribonucleoside + phosphate. Functionally, nucleotidase that shows phosphatase activity on nucleoside 5'-monophosphates. The chain is 5'-nucleotidase SurE from Cyanothece sp. (strain PCC 7425 / ATCC 29141).